The primary structure comprises 512 residues: 2-isopropylmalate synthase (512 aa).

The Pyruvate carboxyltransferase domain maps to 5–268 (LIIFDTTLRD…DVGIDTQHIV (264 aa)). Residues Asp14, His202, His204, and Asn239 each contribute to the Mn(2+) site. Residues 394-512 (GFVSLAQHSE…SKAERVAAQG (119 aa)) form a regulatory domain region.

It belongs to the alpha-IPM synthase/homocitrate synthase family. LeuA type 1 subfamily. As to quaternary structure, homodimer. Mn(2+) serves as cofactor.

The protein localises to the cytoplasm. It catalyses the reaction 3-methyl-2-oxobutanoate + acetyl-CoA + H2O = (2S)-2-isopropylmalate + CoA + H(+). Its pathway is amino-acid biosynthesis; L-leucine biosynthesis; L-leucine from 3-methyl-2-oxobutanoate: step 1/4. Catalyzes the condensation of the acetyl group of acetyl-CoA with 3-methyl-2-oxobutanoate (2-ketoisovalerate) to form 3-carboxy-3-hydroxy-4-methylpentanoate (2-isopropylmalate). The sequence is that of 2-isopropylmalate synthase from Acidovorax ebreus (strain TPSY) (Diaphorobacter sp. (strain TPSY)).